Here is a 196-residue protein sequence, read N- to C-terminus: Lipoprotein signal peptidase (196 aa).

The next 3 helical transmembrane spans lie at 43-63 (LMLK…GISF), 75-95 (AVFI…MVCS), and 100-120 (GFAG…DRLF). Catalysis depends on residues D126 and D144. The helical transmembrane segment at 135–155 (YSFPVFNLADCFITIGVIILI) threads the bilayer.

This sequence belongs to the peptidase A8 family.

It is found in the cell inner membrane. The catalysed reaction is Release of signal peptides from bacterial membrane prolipoproteins. Hydrolyzes -Xaa-Yaa-Zaa-|-(S,diacylglyceryl)Cys-, in which Xaa is hydrophobic (preferably Leu), and Yaa (Ala or Ser) and Zaa (Gly or Ala) have small, neutral side chains.. Its pathway is protein modification; lipoprotein biosynthesis (signal peptide cleavage). Functionally, this protein specifically catalyzes the removal of signal peptides from prolipoproteins. In Rickettsia canadensis (strain McKiel), this protein is Lipoprotein signal peptidase.